The primary structure comprises 351 residues: Holliday junction branch migration complex subunit RuvB (351 aa).

A large ATPase domain (RuvB-L) region spans residues Met1 to Tyr189. ATP-binding positions include Leu28, Arg29, Gly70, Lys73, Thr74, Ser75, Glu136–Phe138, Arg179, Tyr189, and Arg226. Mg(2+) is bound at residue Thr74. The interval Glu190–Asp260 is small ATPAse domain (RuvB-S). The head domain (RuvB-H) stretch occupies residues Glu263–Asp351. DNA-binding residues include Arg318 and Arg323.

The protein belongs to the RuvB family. In terms of assembly, homohexamer. Forms an RuvA(8)-RuvB(12)-Holliday junction (HJ) complex. HJ DNA is sandwiched between 2 RuvA tetramers; dsDNA enters through RuvA and exits via RuvB. An RuvB hexamer assembles on each DNA strand where it exits the tetramer. Each RuvB hexamer is contacted by two RuvA subunits (via domain III) on 2 adjacent RuvB subunits; this complex drives branch migration. In the full resolvosome a probable DNA-RuvA(4)-RuvB(12)-RuvC(2) complex forms which resolves the HJ.

It is found in the cytoplasm. The enzyme catalyses ATP + H2O = ADP + phosphate + H(+). The RuvA-RuvB-RuvC complex processes Holliday junction (HJ) DNA during genetic recombination and DNA repair, while the RuvA-RuvB complex plays an important role in the rescue of blocked DNA replication forks via replication fork reversal (RFR). RuvA specifically binds to HJ cruciform DNA, conferring on it an open structure. The RuvB hexamer acts as an ATP-dependent pump, pulling dsDNA into and through the RuvAB complex. RuvB forms 2 homohexamers on either side of HJ DNA bound by 1 or 2 RuvA tetramers; 4 subunits per hexamer contact DNA at a time. Coordinated motions by a converter formed by DNA-disengaged RuvB subunits stimulates ATP hydrolysis and nucleotide exchange. Immobilization of the converter enables RuvB to convert the ATP-contained energy into a lever motion, pulling 2 nucleotides of DNA out of the RuvA tetramer per ATP hydrolyzed, thus driving DNA branch migration. The RuvB motors rotate together with the DNA substrate, which together with the progressing nucleotide cycle form the mechanistic basis for DNA recombination by continuous HJ branch migration. Branch migration allows RuvC to scan DNA until it finds its consensus sequence, where it cleaves and resolves cruciform DNA. This chain is Holliday junction branch migration complex subunit RuvB, found in Mycobacterium avium (strain 104).